Here is a 291-residue protein sequence, read N- to C-terminus: Verruculogen synthase (291 aa).

Tyr68 is an active-site residue.

This sequence belongs to the PhyH family. Homodimer. Fe cation serves as cofactor.

It catalyses the reaction fumitremorgin B + 2-oxoglutarate + AH2 + 2 O2 = verruculogen + succinate + A + CO2 + H2O. It participates in mycotoxin biosynthesis. In terms of biological role, verruculogen synthase; part of the gene cluster that mediates the biosynthesis of fumitremorgins, indole alkaloids that carry not only intriguing chemical structures, but also interesting biological and pharmacological activities. The biosynthesis of fumitremorgin-type alkaloids begins by condensation of the two amino acids L-tryptophan and L-proline to brevianamide F, catalyzed by the non-ribosomal peptide synthetase ftmA. Brevianamide F is then prenylated by the prenyltransferase ftmPT1/ftmB in the presence of dimethylallyl diphosphate, resulting in the formation of tryprostatin B. The three cytochrome P450 monooxygenases, ftmP450-1/ftmC, ftmP450-2/ftmE and ftmP450-3/FtmG, are responsible for the conversion of tryprostatin B to 6-hydroxytryprostatin B, tryprostatin A to fumitremorgin C and fumitremorgin C to 12,13-dihydroxyfumitremorgin C, respectively. The putative methyltransferase ftmMT/ftmD is expected for the conversion of 6-hydroxytryprostatin B to tryprostatin A. FtmPT2/FtmH catalyzes the prenylation of 12,13-dihydroxyfumitre-morgin C in the presence of dimethylallyl diphosphate, resulting in the formation of fumitremorgin B. Fumitremorgin B is further converted to verruculogen by ftmOx1/ftmF via the insertion of an endoperoxide bond between the two prenyl moieties. In some fungal species, verruculogen is further converted to fumitremorgin A, but the enzymes involved in this step have not been identified yet. The polypeptide is Verruculogen synthase (Aspergillus fumigatus (Neosartorya fumigata)).